A 336-amino-acid polypeptide reads, in one-letter code: Mitochondrial thiamine diphosphate carrier 2 (336 aa).

The next 6 helical transmembrane spans lie at R11–S27, V88–L105, Y127–L150, L182–L199, S230–F246, and G303–Y322. Solcar repeat units lie at residues R11 to F111, L124 to S210, and V231 to W328.

The protein belongs to the mitochondrial carrier (TC 2.A.29) family. Ubiquitous.

The protein localises to the mitochondrion inner membrane. Mitochondrial transporter that mediates uptake of thiamine diphosphate (ThDP) into mitochondria. The polypeptide is Mitochondrial thiamine diphosphate carrier 2 (Zea mays (Maize)).